The chain runs to 39 residues: Photosystem II reaction center protein L (39 aa).

A helical transmembrane segment spans residues 18–38; that stretch reads SLYLGLLLTFVMGILFSSYFF.

It belongs to the PsbL family. As to quaternary structure, PSII is composed of 1 copy each of membrane proteins PsbA, PsbB, PsbC, PsbD, PsbE, PsbF, PsbH, PsbI, PsbJ, PsbK, PsbL, PsbM, PsbT, PsbX, PsbY, Psb30/Ycf12, peripheral proteins PsbO, CyanoQ (PsbQ), PsbU, PsbV and a large number of cofactors. It forms dimeric complexes.

It localises to the cellular thylakoid membrane. Functionally, one of the components of the core complex of photosystem II (PSII). PSII is a light-driven water:plastoquinone oxidoreductase that uses light energy to abstract electrons from H(2)O, generating O(2) and a proton gradient subsequently used for ATP formation. It consists of a core antenna complex that captures photons, and an electron transfer chain that converts photonic excitation into a charge separation. This subunit is found at the monomer-monomer interface and is required for correct PSII assembly and/or dimerization. In Prochlorococcus marinus (strain MIT 9211), this protein is Photosystem II reaction center protein L.